The primary structure comprises 82 residues: Acyl carrier protein (82 aa).

Residues 3-77 enclose the Carrier domain; the sequence is SSIFDKVQNI…QAIEFIQHAI (75 aa). Serine 37 is modified (O-(pantetheine 4'-phosphoryl)serine).

It belongs to the acyl carrier protein (ACP) family. 4'-phosphopantetheine is transferred from CoA to a specific serine of apo-ACP by AcpS. This modification is essential for activity because fatty acids are bound in thioester linkage to the sulfhydryl of the prosthetic group.

The protein resides in the plastid. It is found in the chloroplast. The protein operates within lipid metabolism; fatty acid biosynthesis. Functionally, carrier of the growing fatty acid chain in fatty acid biosynthesis. This chain is Acyl carrier protein, found in Gracilaria tenuistipitata var. liui (Red alga).